Consider the following 364-residue polypeptide: 4-hydroxy-3-methylbut-2-en-1-yl diphosphate synthase (flavodoxin) (364 aa).

Residues Cys268, Cys271, Cys303, and Glu310 each contribute to the [4Fe-4S] cluster site.

This sequence belongs to the IspG family. [4Fe-4S] cluster is required as a cofactor.

The enzyme catalyses (2E)-4-hydroxy-3-methylbut-2-enyl diphosphate + oxidized [flavodoxin] + H2O + 2 H(+) = 2-C-methyl-D-erythritol 2,4-cyclic diphosphate + reduced [flavodoxin]. It participates in isoprenoid biosynthesis; isopentenyl diphosphate biosynthesis via DXP pathway; isopentenyl diphosphate from 1-deoxy-D-xylulose 5-phosphate: step 5/6. Converts 2C-methyl-D-erythritol 2,4-cyclodiphosphate (ME-2,4cPP) into 1-hydroxy-2-methyl-2-(E)-butenyl 4-diphosphate. In Anoxybacillus flavithermus (strain DSM 21510 / WK1), this protein is 4-hydroxy-3-methylbut-2-en-1-yl diphosphate synthase (flavodoxin).